A 305-amino-acid polypeptide reads, in one-letter code: GMP synthase [glutamine-hydrolyzing] subunit B (305 aa).

Positions 2–185 (VEPTAFIDEK…LDLESIIAER (184 aa)) constitute a GMPS ATP-PPase domain. 29–35 (SGGVDSS) provides a ligand contact to ATP.

In terms of assembly, heterodimer composed of a glutamine amidotransferase subunit (A) and a GMP-binding subunit (B).

The catalysed reaction is XMP + L-glutamine + ATP + H2O = GMP + L-glutamate + AMP + diphosphate + 2 H(+). Its pathway is purine metabolism; GMP biosynthesis; GMP from XMP (L-Gln route): step 1/1. Catalyzes the synthesis of GMP from XMP. The chain is GMP synthase [glutamine-hydrolyzing] subunit B from Natronomonas pharaonis (strain ATCC 35678 / DSM 2160 / CIP 103997 / JCM 8858 / NBRC 14720 / NCIMB 2260 / Gabara) (Halobacterium pharaonis).